Reading from the N-terminus, the 405-residue chain is Argininosuccinate synthase (405 aa).

8 to 16 (AYSGGLDTS) contacts ATP. Residues Tyr-86 and Ser-91 each contribute to the L-citrulline site. Gly-116 provides a ligand contact to ATP. Residues Thr-118, Asn-122, and Asp-123 each coordinate L-aspartate. Asn-122 serves as a coordination point for L-citrulline. The L-citrulline site is built by Arg-126, Ser-175, Ser-184, Glu-260, and Tyr-272.

It belongs to the argininosuccinate synthase family. Type 1 subfamily. As to quaternary structure, homotetramer.

The protein localises to the cytoplasm. It carries out the reaction L-citrulline + L-aspartate + ATP = 2-(N(omega)-L-arginino)succinate + AMP + diphosphate + H(+). The protein operates within amino-acid biosynthesis; L-arginine biosynthesis; L-arginine from L-ornithine and carbamoyl phosphate: step 2/3. This chain is Argininosuccinate synthase, found in Koribacter versatilis (strain Ellin345).